The chain runs to 50 residues: MYDEILSAFFEVNDELQSEARCGEKNDRCKTNQDCCSGFRCTKFRRCGRR.

3 disulfide bridges follow: Cys-22–Cys-36, Cys-29–Cys-41, and Cys-35–Cys-47.

This sequence belongs to the neurotoxin 10 (Hwtx-1) family. 64 (Jztx-20) subfamily. As to expression, expressed by the venom gland.

It is found in the secreted. In terms of biological role, probable ion channel inhibitor. This chain is U23-theraphotoxin-Cg1a 2, found in Chilobrachys guangxiensis (Chinese earth tiger tarantula).